We begin with the raw amino-acid sequence, 705 residues long: 1,4-alpha-glucan branching enzyme GlgB (705 aa).

Residue aspartate 309 is the Nucleophile of the active site. Residue glutamate 360 is the Proton donor of the active site. Positions 654 to 705 (VQVERAADPRPNEQQRLVAETPAHEGGRSAPADAAESAEQKPDDEQKGGKKA) are disordered. Residues 691-705 (AEQKPDDEQKGGKKA) are compositionally biased toward basic and acidic residues.

This sequence belongs to the glycosyl hydrolase 13 family. GlgB subfamily. Monomer.

It carries out the reaction Transfers a segment of a (1-&gt;4)-alpha-D-glucan chain to a primary hydroxy group in a similar glucan chain.. It participates in glycan biosynthesis; glycogen biosynthesis. In terms of biological role, catalyzes the formation of the alpha-1,6-glucosidic linkages in glycogen by scission of a 1,4-alpha-linked oligosaccharide from growing alpha-1,4-glucan chains and the subsequent attachment of the oligosaccharide to the alpha-1,6 position. The polypeptide is 1,4-alpha-glucan branching enzyme GlgB (Deinococcus radiodurans (strain ATCC 13939 / DSM 20539 / JCM 16871 / CCUG 27074 / LMG 4051 / NBRC 15346 / NCIMB 9279 / VKM B-1422 / R1)).